The primary structure comprises 270 residues: Thiazole synthase (270 aa).

Residue lysine 112 is the Schiff-base intermediate with DXP of the active site. Residues glycine 173, 199-200 (AG), and 221-222 (NS) contribute to the 1-deoxy-D-xylulose 5-phosphate site.

This sequence belongs to the ThiG family. In terms of assembly, homotetramer. Forms heterodimers with either ThiH or ThiS.

The protein resides in the cytoplasm. The catalysed reaction is [ThiS sulfur-carrier protein]-C-terminal-Gly-aminoethanethioate + 2-iminoacetate + 1-deoxy-D-xylulose 5-phosphate = [ThiS sulfur-carrier protein]-C-terminal Gly-Gly + 2-[(2R,5Z)-2-carboxy-4-methylthiazol-5(2H)-ylidene]ethyl phosphate + 2 H2O + H(+). It functions in the pathway cofactor biosynthesis; thiamine diphosphate biosynthesis. Catalyzes the rearrangement of 1-deoxy-D-xylulose 5-phosphate (DXP) to produce the thiazole phosphate moiety of thiamine. Sulfur is provided by the thiocarboxylate moiety of the carrier protein ThiS. In vitro, sulfur can be provided by H(2)S. This is Thiazole synthase from Pseudomonas entomophila (strain L48).